Here is a 202-residue protein sequence, read N- to C-terminus: Small ribosomal subunit protein uS4 (202 aa).

The segment at 17-42 is disordered; it reads ELPGLSRKTPRRAYPPGQHGQARKKR. The S4 RNA-binding domain maps to 90-152; that stretch reads MRLDNTIFRL…DASRKLIETH (63 aa).

It belongs to the universal ribosomal protein uS4 family. Part of the 30S ribosomal subunit. Contacts protein S5. The interaction surface between S4 and S5 is involved in control of translational fidelity.

Functionally, one of the primary rRNA binding proteins, it binds directly to 16S rRNA where it nucleates assembly of the body of the 30S subunit. Its function is as follows. With S5 and S12 plays an important role in translational accuracy. This is Small ribosomal subunit protein uS4 from Acaryochloris marina (strain MBIC 11017).